Consider the following 179-residue polypeptide: Large ribosomal subunit protein uL6 (179 aa).

Belongs to the universal ribosomal protein uL6 family. Part of the 50S ribosomal subunit.

Its function is as follows. This protein binds to the 23S rRNA, and is important in its secondary structure. It is located near the subunit interface in the base of the L7/L12 stalk, and near the tRNA binding site of the peptidyltransferase center. This is Large ribosomal subunit protein uL6 from Rhodococcus erythropolis (strain PR4 / NBRC 100887).